We begin with the raw amino-acid sequence, 95 residues long: Co-chaperonin GroES (95 aa).

Belongs to the GroES chaperonin family. In terms of assembly, heptamer of 7 subunits arranged in a ring. Interacts with the chaperonin GroEL.

The protein resides in the cytoplasm. Its function is as follows. Together with the chaperonin GroEL, plays an essential role in assisting protein folding. The GroEL-GroES system forms a nano-cage that allows encapsulation of the non-native substrate proteins and provides a physical environment optimized to promote and accelerate protein folding. GroES binds to the apical surface of the GroEL ring, thereby capping the opening of the GroEL channel. In Staphylococcus haemolyticus (strain JCSC1435), this protein is Co-chaperonin GroES.